The primary structure comprises 557 residues: Selenoprotein N (557 aa).

Residues 1 to 21 (MAADVDKTPAGEQKDDHEDRG) show a composition bias toward basic and acidic residues. A disordered region spans residues 1 to 28 (MAADVDKTPAGEQKDDHEDRGTPSSRRG). The chain crosses the membrane as a helical span at residues 35 to 55 (ISSLFIIAAIPVIGVCIKYYL). Residue Sec-430 is a non-standard amino acid, selenocysteine. Asn-451 and Asn-499 each carry an N-linked (GlcNAc...) asparagine glycan.

As to quaternary structure, interacts with ryr3.

The protein localises to the endoplasmic reticulum membrane. Its function is as follows. Plays an important role in cell protection against oxidative stress and in the regulation of redox-related calcium homeostasis. Regulates the calcium level of the ER by protecting the calcium pump ATP2A2 against the oxidoreductase ERO1A-mediated oxidative damage. Acts as a modulator of ryanodine receptor (RyR) activity: protects RyR from oxidation due to increased oxidative stress, or directly controls the RyR redox state, regulating the RyR-mediated calcium mobilization required for normal muscle development and differentiation. Plays an important role in muscle development and differentiation during early development. Required for development of the slow muscle fiber lineage. Required for the correct organization and attachment of the myofibrils, as well as for the continuity and integrity of the connective tissue that forms the myoseptum. This chain is Selenoprotein N, found in Danio rerio (Zebrafish).